The primary structure comprises 350 residues: Beta-ketodecanoyl-[acyl-carrier-protein] synthase (350 aa).

The active site involves Cys133.

It belongs to the thiolase-like superfamily. Beta-ketoacyl-ACP synthases family.

The catalysed reaction is octanoyl-CoA + malonyl-[ACP] + H(+) = 3-oxodecanoyl-[ACP] + CO2 + CoA. Its pathway is lipid metabolism; fatty acid biosynthesis. In terms of biological role, catalyzes the condensation of octanoyl-CoA, obtained from exogenously supplied fatty acids via beta-oxidation, with malonyl-[acyl-carrier protein], forming 3-oxodecanoyl-[acyl-carrier protein], an intermediate of the fatty acid elongation cycle that can then be extended to supply all of the cellular fatty acid needs. The enzyme thereby shunts fatty acid degradation intermediates from the beta-oxidation pathway into de novo fatty acid biosynthesis. The polypeptide is Beta-ketodecanoyl-[acyl-carrier-protein] synthase (Pseudomonas aeruginosa (strain ATCC 15692 / DSM 22644 / CIP 104116 / JCM 14847 / LMG 12228 / 1C / PRS 101 / PAO1)).